The primary structure comprises 254 residues: Pectate lyase E (254 aa).

The first 17 residues, 1–17, serve as a signal peptide directing secretion; the sequence is MYQPLLLLPLLLTSAFA. Positions 227 to 254 are disordered; it reads TNNNSKEPKKKSSGPSSYCKYSEPLSKC. Asn229 carries N-linked (GlcNAc...) asparagine glycosylation. A compositionally biased stretch (low complexity) spans 239–254; it reads SGPSSYCKYSEPLSKC.

This sequence belongs to the polysaccharide lyase 3 family. It depends on Ca(2+) as a cofactor.

Its subcellular location is the secreted. It catalyses the reaction Eliminative cleavage of (1-&gt;4)-alpha-D-galacturonan to give oligosaccharides with 4-deoxy-alpha-D-galact-4-enuronosyl groups at their non-reducing ends.. Functionally, pectinolytic enzyme consist of four classes of enzymes: pectin lyase, polygalacturonase, pectin methylesterase and rhamnogalacturonase. Among pectinolytic enzymes, pectin lyase is the most important in depolymerization of pectin, since it cleaves internal glycosidic bonds of highly methylated pectins. Favors pectate, the anion, over pectin, the methyl ester. The chain is Pectate lyase E (plyE) from Emericella nidulans (strain FGSC A4 / ATCC 38163 / CBS 112.46 / NRRL 194 / M139) (Aspergillus nidulans).